A 248-amino-acid polypeptide reads, in one-letter code: Triosephosphate isomerase (248 aa).

Positions 12 and 14 each coordinate substrate. An igE-binding region spans residues asparagine 16–lysine 30. Histidine 95 serves as the catalytic Electrophile. Catalysis depends on glutamate 165, which acts as the Proton acceptor. IgE-binding stretches follow at residues proline 166–glutamine 180 and arginine 205–glutamate 219.

This sequence belongs to the triosephosphate isomerase family. Homodimer. As to expression, expressed in skeletal muscle (at protein level).

The protein resides in the cytoplasm. The enzyme catalyses D-glyceraldehyde 3-phosphate = dihydroxyacetone phosphate. It catalyses the reaction dihydroxyacetone phosphate = methylglyoxal + phosphate. The protein operates within carbohydrate biosynthesis; gluconeogenesis. It functions in the pathway carbohydrate degradation; glycolysis; D-glyceraldehyde 3-phosphate from glycerone phosphate: step 1/1. In terms of biological role, triosephosphate isomerase is an extremely efficient metabolic enzyme that catalyzes the interconversion between dihydroxyacetone phosphate (DHAP) and D-glyceraldehyde-3-phosphate (G3P) in glycolysis and gluconeogenesis. Its function is as follows. It is also responsible for the non-negligible production of methylglyoxal a reactive cytotoxic side-product that modifies and can alter proteins, DNA and lipids. This is Triosephosphate isomerase from Procambarus clarkii (Red swamp crayfish).